Reading from the N-terminus, the 91-residue chain is Large ribosomal subunit protein uL23 (91 aa).

This sequence belongs to the universal ribosomal protein uL23 family. In terms of assembly, part of the 50S ribosomal subunit. Contacts protein L29, and trigger factor when it is bound to the ribosome.

In terms of biological role, one of the early assembly proteins it binds 23S rRNA. One of the proteins that surrounds the polypeptide exit tunnel on the outside of the ribosome. Forms the main docking site for trigger factor binding to the ribosome. The protein is Large ribosomal subunit protein uL23 of Macrococcus caseolyticus (strain JCSC5402) (Macrococcoides caseolyticum).